Here is a 305-residue protein sequence, read N- to C-terminus: Nitrogen assimilation regulatory protein nac (305 aa).

The region spanning 1 to 58 (MNLRRLKYFVKIVDIGSLTQAAEVLHIAQPALSQQVATLEGEMDQQLLIRTKRGVTPT) is the HTH lysR-type domain. The H-T-H motif DNA-binding region spans 18 to 37 (LTQAAEVLHIAQPALSQQVA).

The protein belongs to the LysR transcriptional regulatory family.

Transcriptional activator for the hut, put and ure operons and repressor for the gdh and gltB operons in response to nitrogen limitation. Negative regulator of its own expression. In Klebsiella aerogenes (Enterobacter aerogenes), this protein is Nitrogen assimilation regulatory protein nac (nac).